The chain runs to 262 residues: UPF0739 protein C1orf74 homolog (262 aa).

This sequence belongs to the UPF0739 family.

The sequence is that of UPF0739 protein C1orf74 homolog from Xenopus laevis (African clawed frog).